The sequence spans 385 residues: MNPVPAQREYFLDSIRAWLMLLGIPFHISLIYSSHTWHVNSAEPSLWLTLFNDFIHSFRMLVFFVISGYFSYMLFLRYPLKKWWKVRVERVGIPMLTAIPLLTLPQFIMLQYVKGKAESWPGLSLYDKYNTLAWELISHLWFLLVLVVMTTLCVWIFKRIRNNLENSDKTNKKFSMVKLSVIFLCLGIGYAVIRRTIFIVYPPILSNGMFNFIVMQTLFYLPFFILGALAFIFPHLKALFTTPSRGCTLAAALAFVAYLLNQRYGSGDAWMYETESVITMVLGLWMVNVVFSFGHRLLNFQSARVTYFVNASLFIYLVHHPLTLFFGAYITPHITSNWLGFLCGLIFVVGIAIILYEIHLRIPLLKFLFSGKPVVKRENDKAPAR.

The next 10 membrane-spanning stretches (helical) occupy residues 17 to 37, 60 to 80, 91 to 111, 137 to 157, 173 to 193, 212 to 232, 239 to 259, 274 to 294, 311 to 331, and 338 to 358; these read AWLMLLGIPFHISLIYSSHTW, MLVFFVISGYFSYMLFLRYPL, VGIPMLTAIPLLTLPQFIMLQ, ISHLWFLLVLVVMTTLCVWIF, KFSMVKLSVIFLCLGIGYAVI, FIVMQTLFYLPFFILGALAFI, LFTTPSRGCTLAAALAFVAYL, TESVITMVLGLWMVNVVFSFG, ASLFIYLVHHPLTLFFGAYIT, and WLGFLCGLIFVVGIAIILYEI.

Belongs to the acyltransferase 3 family. OpgC subfamily.

It is found in the cell membrane. Its pathway is glycan metabolism; osmoregulated periplasmic glucan (OPG) biosynthesis. Functionally, necessary for the succinyl substitution of periplasmic glucans. Could catalyze the transfer of succinyl residues from the cytoplasmic side of the membrane to the nascent glucan backbones on the periplasmic side of the membrane. This Shigella boydii serotype 4 (strain Sb227) protein is Glucans biosynthesis protein C.